We begin with the raw amino-acid sequence, 418 residues long: Serine hydroxymethyltransferase (418 aa).

(6S)-5,6,7,8-tetrahydrofolate-binding positions include Leu-121 and 125-127 (GHL). Position 230 is an N6-(pyridoxal phosphate)lysine (Lys-230). Residue 355–357 (SPF) participates in (6S)-5,6,7,8-tetrahydrofolate binding.

Belongs to the SHMT family. As to quaternary structure, homodimer. The cofactor is pyridoxal 5'-phosphate.

It localises to the cytoplasm. It carries out the reaction (6R)-5,10-methylene-5,6,7,8-tetrahydrofolate + glycine + H2O = (6S)-5,6,7,8-tetrahydrofolate + L-serine. It functions in the pathway one-carbon metabolism; tetrahydrofolate interconversion. The protein operates within amino-acid biosynthesis; glycine biosynthesis; glycine from L-serine: step 1/1. In terms of biological role, catalyzes the reversible interconversion of serine and glycine with tetrahydrofolate (THF) serving as the one-carbon carrier. This reaction serves as the major source of one-carbon groups required for the biosynthesis of purines, thymidylate, methionine, and other important biomolecules. Also exhibits THF-independent aldolase activity toward beta-hydroxyamino acids, producing glycine and aldehydes, via a retro-aldol mechanism. In Streptococcus pyogenes serotype M5 (strain Manfredo), this protein is Serine hydroxymethyltransferase.